Consider the following 107-residue polypeptide: uncharacterized protein (107 aa).

A helical transmembrane segment spans residues 12-32; it reads IILNIFLALLLVYFIFHCIYG.

The protein localises to the membrane. This is an uncharacterized protein from Rickettsia prowazekii (strain Madrid E).